A 546-amino-acid polypeptide reads, in one-letter code: Chaperonin GroEL 1 (546 aa).

Residues 30 to 33, Lys51, 87 to 91, Gly415, 479 to 481, and Asp495 contribute to the ATP site; these read TLGP, DGTTT, and NAA. The segment at 526–546 is disordered; it reads KEDAPMPGGMPGGMGGMGMDM. Positions 534 to 546 are enriched in gly residues; sequence GMPGGMGGMGMDM.

It belongs to the chaperonin (HSP60) family. As to quaternary structure, forms a cylinder of 14 subunits composed of two heptameric rings stacked back-to-back. Interacts with the co-chaperonin GroES.

It localises to the cytoplasm. It carries out the reaction ATP + H2O + a folded polypeptide = ADP + phosphate + an unfolded polypeptide.. Together with its co-chaperonin GroES, plays an essential role in assisting protein folding. The GroEL-GroES system forms a nano-cage that allows encapsulation of the non-native substrate proteins and provides a physical environment optimized to promote and accelerate protein folding. The polypeptide is Chaperonin GroEL 1 (Burkholderia ambifaria (strain ATCC BAA-244 / DSM 16087 / CCUG 44356 / LMG 19182 / AMMD) (Burkholderia cepacia (strain AMMD))).